Reading from the N-terminus, the 115-residue chain is Large ribosomal subunit protein bL19 (115 aa).

Belongs to the bacterial ribosomal protein bL19 family.

In terms of biological role, this protein is located at the 30S-50S ribosomal subunit interface and may play a role in the structure and function of the aminoacyl-tRNA binding site. The protein is Large ribosomal subunit protein bL19 of Francisella tularensis subsp. holarctica (strain FTNF002-00 / FTA).